Reading from the N-terminus, the 751-residue chain is Polyadenylate-binding protein, cytoplasmic and nuclear (751 aa).

2 stretches are compositionally biased toward polar residues: residues 1–26 (MSAEVSTTPAADNTVNGTPEATNPAA) and 36–50 (ESASPSATPSANQPH). The disordered stretch occupies residues 1–50 (MSAEVSTTPAADNTVNGTPEATNPAATSAPEVTAVESASPSATPSANQPH). RRM domains lie at 52 to 130 (ASLY…WSQR), 140 to 217 (GNVF…HHIS), 233 to 310 (TNVY…RAQK), and 336 to 458 (VNLY…LAQR). 2 disordered regions span residues 371–413 (TVTA…KKTE) and 601–643 (GQGM…REEV). Residues 379–413 (ESEKEKESNKENEKEGEEKTEEKPKESEEEAKKTE) show a composition bias toward basic and acidic residues. A compositionally biased stretch (gly residues) spans 603 to 629 (GMRGPGYGQGRGGAPVQGGPRPQGGRG). The PABC domain maps to 646 to 723 (TGGLTAQTLN…ALSVYDEYMK (78 aa)). Residues 725 to 751 (KGEGEAPAEPAKPKEDAAETATEENKS) are disordered. The span at 735–751 (AKPKEDAAETATEENKS) shows a compositional bias: basic and acidic residues.

Belongs to the polyadenylate-binding protein type-1 family.

It localises to the cytoplasm. The protein localises to the nucleus. Its function is as follows. Binds the poly(A) tail of mRNA. Appears to be an important mediator of the multiple roles of the poly(A) tail in mRNA biogenesis, stability and translation. In the nucleus, involved in both mRNA cleavage and polyadenylation. Is also required for efficient mRNA export to the cytoplasm. Acts in concert with a poly(A)-specific nuclease (PAN) to affect poly(A) tail shortening, which may occur concomitantly with either nucleocytoplasmic mRNA transport or translational initiation. In the cytoplasm, stimulates translation initiation and regulates mRNA decay through translation termination-coupled poly(A) shortening, probably mediated by PAN. This Neosartorya fischeri (strain ATCC 1020 / DSM 3700 / CBS 544.65 / FGSC A1164 / JCM 1740 / NRRL 181 / WB 181) (Aspergillus fischerianus) protein is Polyadenylate-binding protein, cytoplasmic and nuclear (pab1).